Reading from the N-terminus, the 121-residue chain is Protein yippee-like At3g55890 (121 aa).

The region spanning 12–109 is the Yippee domain; that stretch reads NIYICKLCKT…LELYKISGPH (98 aa). The Zn(2+) site is built by C16, C19, C72, and C75.

It belongs to the yippee family.

This chain is Protein yippee-like At3g55890, found in Arabidopsis thaliana (Mouse-ear cress).